Consider the following 225-residue polypeptide: ATP-dependent dethiobiotin synthetase BioD (225 aa).

12–17 contacts ATP; that stretch reads EVGKTY. Mg(2+) is bound at residue Thr-16. Lys-37 is a catalytic residue. A substrate-binding site is contributed by Ser-41. ATP contacts are provided by residues Asp-52, 114–117, and 174–175; these read EGAG and NC. Mg(2+) contacts are provided by Asp-52 and Glu-114.

It belongs to the dethiobiotin synthetase family. Homodimer. It depends on Mg(2+) as a cofactor.

It is found in the cytoplasm. It carries out the reaction (7R,8S)-7,8-diammoniononanoate + CO2 + ATP = (4R,5S)-dethiobiotin + ADP + phosphate + 3 H(+). It functions in the pathway cofactor biosynthesis; biotin biosynthesis; biotin from 7,8-diaminononanoate: step 1/2. Its function is as follows. Catalyzes a mechanistically unusual reaction, the ATP-dependent insertion of CO2 between the N7 and N8 nitrogen atoms of 7,8-diaminopelargonic acid (DAPA, also called 7,8-diammoniononanoate) to form a ureido ring. This Francisella tularensis subsp. mediasiatica (strain FSC147) protein is ATP-dependent dethiobiotin synthetase BioD.